Here is a 593-residue protein sequence, read N- to C-terminus: MSMSKLLSPPPTSPPGPALSRLPCRRVAPPPVLPFPFPLRRLTSRRVFATSCSSSDSEHAPSASSTALAGAGDDLSAGVTQEREGALPFVQLSSGIVLRTEEQSLLGDHAPAPAPASAASSFALLDELNGGCREDDHLGETPAYPAAMNALYAACLAGNATEQLWNFTWPAAVAVLHPASILPVAVLGFFTKLVVFAAGPLVGELISSLPRIPAYRSLAAIQTAAHLVSVATITYAFAVHRAAAASLLLRPWFAVLVASTAVDRLACVALGIIAERDFVVQLAGAGRPVALAKANATLSRVDLLCETVGASIFALLLSKNNPLTCIKLSCVISLCALPLLIFLCGEMNRLADGIFDHSENTTSHAEKTSSFSIRKTVEEAVATVRNGWSEYMRQPVLPASLAYVFVCFNVALAPGALMTTFLIHQGVRPSVIGAFGGSSGAVGILATFATARLVKELGILKAGAAGLIAQSALLGAAVVVYLTGAVSRRAGALFAFLGLIVASRAGHMAYSAIGLQVVQTGNPASKAKLIGATEIAVASLAELAMMAVAVVASDASHFGALAALSATAVTAAAGMYCRWLANPSDELRRIFPS.

Positions 1 to 23 (MSMSKLLSPPPTSPPGPALSRLP) are disordered. The transit peptide at 1 to 51 (MSMSKLLSPPPTSPPGPALSRLPCRRVAPPPVLPFPFPLRRLTSRRVFATS) directs the protein to the chloroplast. A compositionally biased stretch (pro residues) spans 8-17 (SPPPTSPPGP). The next 11 helical transmembrane spans lie at 181–201 (ILPVAVLGFFTKLVVFAAGPL), 219–239 (AAIQTAAHLVSVATITYAFAV), 253–273 (FAVLVASTAVDRLACVALGII), 303–322 (LLCETVGASIFALLLSKNNP), 323–343 (LTCIKLSCVISLCALPLLIFL), 403–423 (YVFVCFNVALAPGALMTTFLI), 431–451 (VIGAFGGSSGAVGILATFATA), 462–482 (AGAAGLIAQSALLGAAVVVYL), 493–513 (LFAFLGLIVASRAGHMAYSAI), 530–550 (IGATEIAVASLAELAMMAVAV), and 557–577 (HFGALAALSATAVTAAAGMYC).

Belongs to the ferroportin (FP) (TC 2.A.100) family. SLC40A subfamily.

The protein localises to the membrane. It localises to the plastid. Its subcellular location is the chloroplast envelope. In terms of biological role, may be involved in iron transport and iron homeostasis. This Oryza sativa subsp. japonica (Rice) protein is Solute carrier family 40 member 3, chloroplastic.